Consider the following 406-residue polypeptide: Histidine--tRNA ligase (406 aa).

Belongs to the class-II aminoacyl-tRNA synthetase family. Homodimer.

The protein localises to the cytoplasm. It catalyses the reaction tRNA(His) + L-histidine + ATP = L-histidyl-tRNA(His) + AMP + diphosphate + H(+). The polypeptide is Histidine--tRNA ligase (Nitratiruptor sp. (strain SB155-2)).